Consider the following 91-residue polypeptide: Probable Fe(2+)-trafficking protein (91 aa).

This sequence belongs to the Fe(2+)-trafficking protein family. In terms of assembly, monomer.

Its function is as follows. Could be a mediator in iron transactions between iron acquisition and iron-requiring processes, such as synthesis and/or repair of Fe-S clusters in biosynthetic enzymes. The protein is Probable Fe(2+)-trafficking protein of Cronobacter sakazakii (strain ATCC BAA-894) (Enterobacter sakazakii).